Here is a 1455-residue protein sequence, read N- to C-terminus: Nik-related protein kinase (1455 aa).

A Protein kinase domain is found at 25–313 (FSLDKAIGLG…SGNMLLHPFV (289 aa)). ATP contacts are provided by residues 31 to 39 (IGLGTYGRI) and lysine 54. The active-site Proton acceptor is aspartate 177. 2 disordered regions span residues 385–404 (LHGEPPQPRWLPDQEDPQDQ) and 471–568 (TQDN…EDKE). Over residues 471-480 (TQDNKATSPE) the composition is skewed to polar residues. Positions 494–505 (EALETEQPKDLD) are enriched in basic and acidic residues. A compositionally biased stretch (low complexity) spans 520-531 (QPRQGQAAEQQQ). The span at 540–568 (PPEEDREPEQAEVQEEAVEPPQAEIEDKE) shows a compositional bias: acidic residues. The stretch at 716-750 (RRRHRRWEDIFNQHEEQLRRVENDREDDSSDNDEV) forms a coiled coil. Disordered stretches follow at residues 760 to 854 (IEPH…PPYS) and 1029 to 1080 (AFGN…TETS). Residues serine 847 and serine 850 each carry the phosphoserine modification. The span at 1029–1038 (AFGNHGANRG) shows a compositional bias: low complexity. A compositionally biased stretch (basic and acidic residues) spans 1044–1078 (RNREANGRNEENGAFGRDQHVFPEFEHEESDRGTE). In terms of domain architecture, CNH spans 1138–1425 (SSEVYCGSLW…RFLCARGDKM (288 aa)).

Belongs to the protein kinase superfamily. STE Ser/Thr protein kinase family. STE20 subfamily.

The enzyme catalyses L-seryl-[protein] + ATP = O-phospho-L-seryl-[protein] + ADP + H(+). It catalyses the reaction L-threonyl-[protein] + ATP = O-phospho-L-threonyl-[protein] + ADP + H(+). May phosphorylate cofilin-1 and induce actin polymerization through this process, during the late stages of embryogenesis. Involved in the TNF-alpha-induced signaling pathway. The chain is Nik-related protein kinase (Nrk) from Mus musculus (Mouse).